Consider the following 1447-residue polypeptide: Bud site selection protein 4 (1447 aa).

Residues 1–16 (MHDAESTVDSLLKEID) are compositionally biased toward basic and acidic residues. 2 disordered regions span residues 1 to 38 (MHDAESTVDSLLKEIDNEMEQTKSNITQNGSEDTPHNW) and 57 to 76 (NTRSNATENSRGRSPSKMST). Ser10 carries the post-translational modification Phosphoserine. Composition is skewed to polar residues over residues 22–32 (TKSNITQNGSE) and 59–76 (RSNATENSRGRSPSKMST). Ser78, Ser81, Ser91, Ser96, and Ser167 each carry phosphoserine. A disordered region spans residues 272-316 (NLPSKLLNTSNNSHSDSRSPTASVEDLNISTNLPGADSSQNNPVT). Residues 277–316 (LLNTSNNSHSDSRSPTASVEDLNISTNLPGADSSQNNPVT) show a composition bias toward polar residues. Thr365 is subject to Phosphothreonine. A Phosphoserine modification is found at Ser367. Residues 444 to 479 (HQESEHANEQPAIIPQKDSSEETFTELNNESEFQRN) form a disordered region. The residue at position 511 (Ser511) is a Phosphoserine. Positions 529–591 (KTSAEEHDLS…NEEPEHVPLL (63 aa)) are disordered. Positions 538-548 (SSSCEDQSVSE) are enriched in polar residues. The segment covering 549 to 580 (ARNKDRIEEKEVETKDENIETEKDESEYHKVE) has biased composition (basic and acidic residues). The residue at position 616 (Ser616) is a Phosphoserine. Over residues 648–664 (ANSQFSQQSSITTASTV) the composition is skewed to polar residues. Positions 648 to 673 (ANSQFSQQSSITTASTVDSKKDNGST) are disordered. Positions 768-879 (EHENIPLSTH…SLWESSYELK (112 aa)) are interaction with IQG1. Ser805 and Ser811 each carry phosphoserine. The region spanning 1302 to 1413 (NIYKEGYLLQ…WYNKLQEVVE (112 aa)) is the PH domain.

As to quaternary structure, interacts with AXL1, AXL2, IQG1 and SEC3. Post-translationally, phosphorylated by CDC28.

Its subcellular location is the bud neck. Required for establishment of the axial budding pattern in haploid cells. Cooperates with other bud site selection proteins to recognize a spatial landmark during mitosis and they subsequently become a landmark for downstream polarity establishment factors that coordinate axial budding and cytokinesis. Involved in the septin organization at the bud neck. This is Bud site selection protein 4 (BUD4) from Saccharomyces cerevisiae (strain ATCC 204508 / S288c) (Baker's yeast).